Here is a 72-residue protein sequence, read N- to C-terminus: Small ribosomal subunit protein bS18c (72 aa).

This sequence belongs to the bacterial ribosomal protein bS18 family. Part of the 30S ribosomal subunit.

It localises to the plastid. The protein localises to the chloroplast. In Thalassiosira pseudonana (Marine diatom), this protein is Small ribosomal subunit protein bS18c.